Reading from the N-terminus, the 317-residue chain is Ciliary microtubule inner protein 2A (317 aa).

Positions 131-153 are disordered; that stretch reads TPDTPHPPCPPGRKGDSRDLGHP.

It belongs to the CIMIP2 family. In terms of assembly, microtubule inner protein component of sperm flagellar doublet microtubules.

The protein resides in the cytoplasm. It is found in the cytoskeleton. Its subcellular location is the flagellum axoneme. Functionally, microtubule inner protein (MIP) part of the dynein-decorated doublet microtubules (DMTs) in flagellum axoneme. Binds to the intra-tubulin interfaces. This chain is Ciliary microtubule inner protein 2A, found in Homo sapiens (Human).